Reading from the N-terminus, the 271-residue chain is 3-methyl-2-oxobutanoate hydroxymethyltransferase (271 aa).

The Mg(2+) site is built by Asp51 and Asp90. Residues 51 to 52 (DS), Asp90, and Lys118 each bind 3-methyl-2-oxobutanoate. Glu120 is a binding site for Mg(2+). Glu186 functions as the Proton acceptor in the catalytic mechanism.

It belongs to the PanB family. In terms of assembly, homodecamer; pentamer of dimers. Mg(2+) is required as a cofactor.

It localises to the cytoplasm. It catalyses the reaction 3-methyl-2-oxobutanoate + (6R)-5,10-methylene-5,6,7,8-tetrahydrofolate + H2O = 2-dehydropantoate + (6S)-5,6,7,8-tetrahydrofolate. The protein operates within cofactor biosynthesis; (R)-pantothenate biosynthesis; (R)-pantoate from 3-methyl-2-oxobutanoate: step 1/2. Its function is as follows. Catalyzes the reversible reaction in which hydroxymethyl group from 5,10-methylenetetrahydrofolate is transferred onto alpha-ketoisovalerate to form ketopantoate. The protein is 3-methyl-2-oxobutanoate hydroxymethyltransferase of Xanthomonas euvesicatoria pv. vesicatoria (strain 85-10) (Xanthomonas campestris pv. vesicatoria).